Here is a 283-residue protein sequence, read N- to C-terminus: 4-diphosphocytidyl-2-C-methyl-D-erythritol kinase (283 aa).

Lysine 10 is an active-site residue. 94–104 (PVAAGLAGGSS) lines the ATP pocket. Aspartate 136 is a catalytic residue.

The protein belongs to the GHMP kinase family. IspE subfamily.

It carries out the reaction 4-CDP-2-C-methyl-D-erythritol + ATP = 4-CDP-2-C-methyl-D-erythritol 2-phosphate + ADP + H(+). The protein operates within isoprenoid biosynthesis; isopentenyl diphosphate biosynthesis via DXP pathway; isopentenyl diphosphate from 1-deoxy-D-xylulose 5-phosphate: step 3/6. In terms of biological role, catalyzes the phosphorylation of the position 2 hydroxy group of 4-diphosphocytidyl-2C-methyl-D-erythritol. This chain is 4-diphosphocytidyl-2-C-methyl-D-erythritol kinase, found in Enterococcus faecalis (strain ATCC 700802 / V583).